The primary structure comprises 521 residues: Probable ATP-dependent RNA helicase Dbp45A (521 aa).

The Q motif motif lies at 7 to 35 (NPFQILGLRPWLVKQLTKLGLKGATPIQQ). The Helicase ATP-binding domain maps to 38 to 209 (IPAILAGQDC…IFPIASDCFE (172 aa)). Residue 51-58 (AKTGSGKT) coordinates ATP. Residues 157–160 (DEAD) carry the DEAD box motif. Positions 237 to 386 (VLIEALRKYR…EHPIDQRMVE (150 aa)) constitute a Helicase C-terminal domain. The interval 448-521 (KRKLQHAEPA…GRADVKKDKA (74 aa)) is disordered. Basic and acidic residues-rich tracts occupy residues 460–482 (EEGK…FEKK) and 502–521 (LNKE…KDKA).

The protein belongs to the DEAD box helicase family. DDX49/DBP8 subfamily.

The enzyme catalyses ATP + H2O = ADP + phosphate + H(+). In terms of biological role, probable ATP-binding RNA helicase. The sequence is that of Probable ATP-dependent RNA helicase Dbp45A (Dbp45A) from Drosophila melanogaster (Fruit fly).